Consider the following 119-residue polypeptide: Holo-[acyl-carrier-protein] synthase (119 aa).

Aspartate 8 and glutamate 58 together coordinate Mg(2+).

This sequence belongs to the P-Pant transferase superfamily. AcpS family. The cofactor is Mg(2+).

It localises to the cytoplasm. The catalysed reaction is apo-[ACP] + CoA = holo-[ACP] + adenosine 3',5'-bisphosphate + H(+). In terms of biological role, transfers the 4'-phosphopantetheine moiety from coenzyme A to a Ser of acyl-carrier-protein. In Bacillus cereus (strain ATCC 10987 / NRS 248), this protein is Holo-[acyl-carrier-protein] synthase.